Here is a 379-residue protein sequence, read N- to C-terminus: Succinyl-diaminopimelate desuccinylase (379 aa).

His70 is a binding site for Zn(2+). Residue Asp72 is part of the active site. Residue Asp103 coordinates Zn(2+). The Proton acceptor role is filled by Glu137. Zn(2+) is bound by residues Glu138, Glu166, and His352.

This sequence belongs to the peptidase M20A family. DapE subfamily. In terms of assembly, homodimer. Zn(2+) is required as a cofactor. Requires Co(2+) as cofactor.

It catalyses the reaction N-succinyl-(2S,6S)-2,6-diaminopimelate + H2O = (2S,6S)-2,6-diaminopimelate + succinate. The protein operates within amino-acid biosynthesis; L-lysine biosynthesis via DAP pathway; LL-2,6-diaminopimelate from (S)-tetrahydrodipicolinate (succinylase route): step 3/3. Functionally, catalyzes the hydrolysis of N-succinyl-L,L-diaminopimelic acid (SDAP), forming succinate and LL-2,6-diaminopimelate (DAP), an intermediate involved in the bacterial biosynthesis of lysine and meso-diaminopimelic acid, an essential component of bacterial cell walls. In Burkholderia ambifaria (strain ATCC BAA-244 / DSM 16087 / CCUG 44356 / LMG 19182 / AMMD) (Burkholderia cepacia (strain AMMD)), this protein is Succinyl-diaminopimelate desuccinylase.